We begin with the raw amino-acid sequence, 147 residues long: uncharacterized protein (147 aa).

The next 2 membrane-spanning stretches (helical) occupy residues 4-26 and 123-145; these read YLRVVLPLSLALNSYGVLAFFWG and YALCVGFFVVLLQLLWGSARAYF.

The protein resides in the cell membrane. This is an uncharacterized protein from Treponema pallidum (strain Nichols).